A 183-amino-acid chain; its full sequence is MKYMIPDEEFIRREGVPITKEEIRAVSIGKLNLNKDDVVVDVGCGSGGMTVEIAKRCKFVYAIDYLDGAIEVTKQNLAKFNIKNCQIIKGRAEDVLDKLEFNKAFIGGTKNIEKIIEILDKKKINHIVANTIVLENAAKIINEFESRGYNVDAVNVFISYAKKIPSGHMFLAKNPITIIKAVR.

Residues T19, 43–47 (GCGSG), D64, and A92 each bind S-adenosyl-L-methionine.

It belongs to the methyltransferase superfamily. Archaeal-type CbiT family.

It catalyses the reaction Co-precorrin-6B + S-adenosyl-L-methionine = Co-precorrin-7 + S-adenosyl-L-homocysteine + CO2. Its pathway is cofactor biosynthesis; adenosylcobalamin biosynthesis; cob(II)yrinate a,c-diamide from sirohydrochlorin (anaerobic route): step 8/10. In terms of biological role, catalyzes the methylation of C-15 in cobalt-precorrin-6B followed by the decarboxylation of C-12 to form cobalt-precorrin-7. The sequence is that of Probable cobalt-precorrin-6B C(15)-methyltransferase (decarboxylating) from Methanocaldococcus jannaschii (strain ATCC 43067 / DSM 2661 / JAL-1 / JCM 10045 / NBRC 100440) (Methanococcus jannaschii).